We begin with the raw amino-acid sequence, 279 residues long: Tryptophan synthase alpha chain (279 aa).

Catalysis depends on proton acceptor residues Glu63 and Asp74.

It belongs to the TrpA family. As to quaternary structure, tetramer of two alpha and two beta chains.

It catalyses the reaction (1S,2R)-1-C-(indol-3-yl)glycerol 3-phosphate + L-serine = D-glyceraldehyde 3-phosphate + L-tryptophan + H2O. It functions in the pathway amino-acid biosynthesis; L-tryptophan biosynthesis; L-tryptophan from chorismate: step 5/5. Functionally, the alpha subunit is responsible for the aldol cleavage of indoleglycerol phosphate to indole and glyceraldehyde 3-phosphate. The sequence is that of Tryptophan synthase alpha chain from Prochlorococcus marinus subsp. pastoris (strain CCMP1986 / NIES-2087 / MED4).